The following is a 62-amino-acid chain: DNA-binding protein 7b (62 aa).

This sequence belongs to the 7 kDa DNA-binding/endoribonuclease P2 family. Monomer.

The protein resides in the cytoplasm. In terms of biological role, can constrain negative DNA supercoils. May be involved in maintaining the integrity of the genome at high temperature. The sequence is that of DNA-binding protein 7b from Acidianus hospitalis (strain W1).